A 282-amino-acid polypeptide reads, in one-letter code: Undecaprenyl-diphosphatase (282 aa).

7 helical membrane passes run 39 to 59, 85 to 105, 115 to 135, 153 to 173, 196 to 216, 230 to 250, and 260 to 280; these read PGAAFTAIVQMGTLAAVLIYF, ATMGWMIAAGTIPIVFFGLLF, SLYWISAALIGLALILWLTEV, IGWKEALLIGVAQSIALIPGS, FSFLLSLPSVLAAALLQLYET, LLVATIAAGVVGYASIAFLIT, and FIIYRIVIGVAILGLIATGAI.

The protein belongs to the UppP family.

Its subcellular location is the cell inner membrane. It carries out the reaction di-trans,octa-cis-undecaprenyl diphosphate + H2O = di-trans,octa-cis-undecaprenyl phosphate + phosphate + H(+). Functionally, catalyzes the dephosphorylation of undecaprenyl diphosphate (UPP). Confers resistance to bacitracin. The protein is Undecaprenyl-diphosphatase of Chlorobium chlorochromatii (strain CaD3).